Reading from the N-terminus, the 251-residue chain is Imidazole glycerol phosphate synthase subunit HisF (251 aa).

Catalysis depends on residues D11 and D130.

Belongs to the HisA/HisF family. As to quaternary structure, heterodimer of HisH and HisF.

The protein localises to the cytoplasm. It carries out the reaction 5-[(5-phospho-1-deoxy-D-ribulos-1-ylimino)methylamino]-1-(5-phospho-beta-D-ribosyl)imidazole-4-carboxamide + L-glutamine = D-erythro-1-(imidazol-4-yl)glycerol 3-phosphate + 5-amino-1-(5-phospho-beta-D-ribosyl)imidazole-4-carboxamide + L-glutamate + H(+). It functions in the pathway amino-acid biosynthesis; L-histidine biosynthesis; L-histidine from 5-phospho-alpha-D-ribose 1-diphosphate: step 5/9. In terms of biological role, IGPS catalyzes the conversion of PRFAR and glutamine to IGP, AICAR and glutamate. The HisF subunit catalyzes the cyclization activity that produces IGP and AICAR from PRFAR using the ammonia provided by the HisH subunit. The polypeptide is Imidazole glycerol phosphate synthase subunit HisF (Flavobacterium psychrophilum (strain ATCC 49511 / DSM 21280 / CIP 103535 / JIP02/86)).